The sequence spans 449 residues: Glucose-6-phosphate isomerase (449 aa).

The Proton donor role is filled by glutamate 291. Active-site residues include histidine 312 and lysine 426.

The protein belongs to the GPI family.

It is found in the cytoplasm. The catalysed reaction is alpha-D-glucose 6-phosphate = beta-D-fructose 6-phosphate. The protein operates within carbohydrate biosynthesis; gluconeogenesis. Its pathway is carbohydrate degradation; glycolysis; D-glyceraldehyde 3-phosphate and glycerone phosphate from D-glucose: step 2/4. In terms of biological role, catalyzes the reversible isomerization of glucose-6-phosphate to fructose-6-phosphate. This Streptococcus pyogenes serotype M1 protein is Glucose-6-phosphate isomerase.